Consider the following 426-residue polypeptide: Serine hydroxymethyltransferase (426 aa).

(6S)-5,6,7,8-tetrahydrofolate contacts are provided by residues Leu-122 and 126–128 (GHL). N6-(pyridoxal phosphate)lysine is present on Lys-231.

This sequence belongs to the SHMT family. As to quaternary structure, homodimer. It depends on pyridoxal 5'-phosphate as a cofactor.

It is found in the cytoplasm. It catalyses the reaction (6R)-5,10-methylene-5,6,7,8-tetrahydrofolate + glycine + H2O = (6S)-5,6,7,8-tetrahydrofolate + L-serine. It functions in the pathway one-carbon metabolism; tetrahydrofolate interconversion. It participates in amino-acid biosynthesis; glycine biosynthesis; glycine from L-serine: step 1/1. In terms of biological role, catalyzes the reversible interconversion of serine and glycine with tetrahydrofolate (THF) serving as the one-carbon carrier. This reaction serves as the major source of one-carbon groups required for the biosynthesis of purines, thymidylate, methionine, and other important biomolecules. Also exhibits THF-independent aldolase activity toward beta-hydroxyamino acids, producing glycine and aldehydes, via a retro-aldol mechanism. This is Serine hydroxymethyltransferase from Koribacter versatilis (strain Ellin345).